Reading from the N-terminus, the 429-residue chain is SET domain-containing protein 14 (429 aa).

8 residues coordinate Zn(2+): C26, C29, C39, C42, C48, C52, H60, and C64. An MYND-type zinc finger spans residues 26–64 (CNQCLTSMAELKKCSACRRLAYCSQECQRADWKLHKVEC).

The protein localises to the nucleus. This chain is SET domain-containing protein 14 (set-14), found in Caenorhabditis elegans.